The chain runs to 180 residues: Isopentenyl-diphosphate Delta-isomerase (180 aa).

Residues H22 and H28 each coordinate Mn(2+). The Nudix hydrolase domain occupies 26 to 160 (LKHKAVSVFA…PERFTPWLKI (135 aa)). Residue C62 is part of the active site. Mg(2+) is bound at residue C62. H64 serves as a coordination point for Mn(2+). E82 is a binding site for Mg(2+). 2 residues coordinate Mn(2+): E108 and E110. Residue E110 is part of the active site.

The protein belongs to the IPP isomerase type 1 family. Requires Mg(2+) as cofactor. The cofactor is Mn(2+).

Its subcellular location is the cytoplasm. The enzyme catalyses isopentenyl diphosphate = dimethylallyl diphosphate. It functions in the pathway isoprenoid biosynthesis; dimethylallyl diphosphate biosynthesis; dimethylallyl diphosphate from isopentenyl diphosphate: step 1/1. Catalyzes the 1,3-allylic rearrangement of the homoallylic substrate isopentenyl (IPP) to its highly electrophilic allylic isomer, dimethylallyl diphosphate (DMAPP). The protein is Isopentenyl-diphosphate Delta-isomerase of Ruegeria pomeroyi (strain ATCC 700808 / DSM 15171 / DSS-3) (Silicibacter pomeroyi).